Consider the following 372-residue polypeptide: F-box/kelch-repeat protein At2g44630 (372 aa).

Over residues 1-13 (MSNADEPPQKTNQ) the composition is skewed to polar residues. The tract at residues 1–21 (MSNADEPPQKTNQPPSSSLTP) is disordered. The F-box domain occupies 21-67 (PPSLFSLPVDIVLNILALVPKRYYPILCCVSKSLRSLIRSPEIHKTR). Kelch repeat units follow at residues 136–181 (EIYC…LVGG) and 183–228 (IYVI…SVSL).

This chain is F-box/kelch-repeat protein At2g44630, found in Arabidopsis thaliana (Mouse-ear cress).